We begin with the raw amino-acid sequence, 236 residues long: MSIHIAAQQGEIADKILLPGDPLRAKFIAENFLDDAVCFNEVRNMFGYTGTYKGHRVSVMGTGMGMPSISIYARELIVDYGVKKLIRVGTAGSLNEEVHVRELVLAQAAATNSNIVRNDWPQYDFPQIASFDLLDKAYHIAKELGMTTHVGNVLSSDVFYSNYFEKNIELGKWGVKAVEMEAAALYYLAAQYHVDALAIMTISDSLVNPDEDTTAEERQNTFTDMMKVGLETLIAE.

Histidine 4 contacts a purine D-ribonucleoside. Phosphate contacts are provided by residues glycine 20, arginine 24, arginine 43, and 87–90; that span reads RVGT. A purine D-ribonucleoside-binding positions include 179–181 and 203–204; these read EME and SD. Aspartate 204 functions as the Proton donor in the catalytic mechanism.

Belongs to the PNP/UDP phosphorylase family. Homohexamer; trimer of homodimers.

It catalyses the reaction a purine D-ribonucleoside + phosphate = a purine nucleobase + alpha-D-ribose 1-phosphate. The catalysed reaction is a purine 2'-deoxy-D-ribonucleoside + phosphate = a purine nucleobase + 2-deoxy-alpha-D-ribose 1-phosphate. In terms of biological role, catalyzes the reversible phosphorolytic breakdown of the N-glycosidic bond in the beta-(deoxy)ribonucleoside molecules, with the formation of the corresponding free purine bases and pentose-1-phosphate. The sequence is that of Purine nucleoside phosphorylase DeoD-type from Streptococcus pneumoniae (strain JJA).